Reading from the N-terminus, the 138-residue chain is ATP synthase epsilon chain 1 (138 aa).

It belongs to the ATPase epsilon chain family. F-type ATPases have 2 components, CF(1) - the catalytic core - and CF(0) - the membrane proton channel. CF(1) has five subunits: alpha(3), beta(3), gamma(1), delta(1), epsilon(1). CF(0) has three main subunits: a, b and c.

The protein localises to the cell inner membrane. In terms of biological role, produces ATP from ADP in the presence of a proton gradient across the membrane. This is ATP synthase epsilon chain 1 from Syntrophotalea carbinolica (strain DSM 2380 / NBRC 103641 / GraBd1) (Pelobacter carbinolicus).